A 369-amino-acid chain; its full sequence is Homoserine O-acetyltransferase (369 aa).

The AB hydrolase-1 domain maps to 44-350; sequence NAILVAHAWT…AYGHDAFLLE (307 aa). Ser-150 serves as the catalytic Nucleophile. A substrate-binding site is contributed by Arg-217. Catalysis depends on residues Asp-311 and His-344. Asp-345 serves as a coordination point for substrate.

Belongs to the AB hydrolase superfamily. MetX family. As to quaternary structure, homodimer.

The protein localises to the cytoplasm. It carries out the reaction L-homoserine + acetyl-CoA = O-acetyl-L-homoserine + CoA. It functions in the pathway amino-acid biosynthesis; L-methionine biosynthesis via de novo pathway; O-acetyl-L-homoserine from L-homoserine: step 1/1. In terms of biological role, transfers an acetyl group from acetyl-CoA to L-homoserine, forming acetyl-L-homoserine. This Geobacter metallireducens (strain ATCC 53774 / DSM 7210 / GS-15) protein is Homoserine O-acetyltransferase.